Here is a 59-residue protein sequence, read N- to C-terminus: DNA gyrase inhibitor YacG (59 aa).

Positions 7, 10, 25, and 29 each coordinate Zn(2+).

It belongs to the DNA gyrase inhibitor YacG family. In terms of assembly, interacts with GyrB. Requires Zn(2+) as cofactor.

In terms of biological role, inhibits all the catalytic activities of DNA gyrase by preventing its interaction with DNA. Acts by binding directly to the C-terminal domain of GyrB, which probably disrupts DNA binding by the gyrase. This Geobacter sulfurreducens (strain ATCC 51573 / DSM 12127 / PCA) protein is DNA gyrase inhibitor YacG.